Here is a 401-residue protein sequence, read N- to C-terminus: Probable thioesterase FGSG_00047 (401 aa).

Residues 379 to 401 (AREMDQRKRQKDFTHTTIHDKNS) form a disordered region.

Belongs to the AMT4 thioesterase family.

It participates in mycotoxin biosynthesis. Functionally, probable thioesterase; part of the gene cluster that mediates the biosynthesis of gramillins A and B, bicyclic lipopeptides that induce cell death in maize leaves but not in wheat leaves. The nonribosomal peptide synthetase GRA1 incorporates respectively a glutamic adic (Glu), a leucine (Leu), a serine (Ser), a hydroxyglutamine (HOGln), a 2-amino decanoic acid, and 2 cysteins (CysB and CysA). The biosynthesis of 2-amino decanoic acid incorporated in gramillins could be initiated by a fatty acid synthase composed of the alpha and beta subunits FGSG_00036 and FGSG_11656. The cytochrome P450 monooxygenase FGSG_15680 could hydroxylate the fatty acid chain. Subsequent oxidation to the ketone by the oxidoreductase FGSG_00048 and transamination by aminotransferase FGSG_00049 could form 2-amino-decanoic acid. On the other hand, FGSG_15680 could also be responsible for the HO-modified glutamine at the gamma-position. Whether hydroxylation occurs on the fully assembled product or on the Gln residue prior to assembly into the gramillins requires further proof. The thioredoxin FGSG_00043 could also be required for the disulfide-bond formation between CysA and CysB. The specific involvement of the remaining proteins from the cluster is more difficult to discern, but could have broader regulatory (FGSG_00040 and FGSG_11657) or enzymatic functions (FGSG_00044 and FGSG_00045). The final C-domain of GRA1 does not possess the expected sequence of a termination CT domain, often implicated in macrocyclization and release of a cyclopeptidein fungal NRPs; and the thioesterase FGSG_00047 may act in concert with the terminal C-domain of GRA1 to catalyze the formation of the macrocyclic anhydride and release of the products. The sequence is that of Probable thioesterase FGSG_00047 from Gibberella zeae (strain ATCC MYA-4620 / CBS 123657 / FGSC 9075 / NRRL 31084 / PH-1) (Wheat head blight fungus).